Here is a 2471-residue protein sequence, read N- to C-terminus: Histidine protein kinase 1 (2471 aa).

A compositionally biased stretch (polar residues) spans 1-10 (MSMNFFNSSE). Disordered stretches follow at residues 1–30 (MSMN…TEHY), 52–75 (ETKK…VPPS), and 395–415 (RQGS…FNIG). A compositionally biased stretch (basic and acidic residues) spans 11-30 (PARDHKPDQEKETVMTTEHY). One can recognise a Protein kinase domain in the interval 358–636 (EHPSQSTDQK…DCHSLLHDLI (279 aa)). In terms of domain architecture, Histidine kinase spans 2004–2225 (NMSHEIRTPF…TFYVSVIMDA (222 aa)). Residue H2007 is modified to Phosphohistidine; by autocatalysis. Residues 2340–2466 (RILLAEDNLL…ELRRILTKVG (127 aa)) form the Response regulatory domain. D2394 is modified (4-aspartylphosphate).

In terms of processing, the phosphorelay mechanism involves the sequential transfer of a phosphate group from His-2007 (H1) in the histidine kinase domain (transmitter domain) to Asp-2394 (D1) of the response regulatory domain (receiver domain). This transfer probably occurs between two CHK1 molecules, rather than intramolecularly.

It catalyses the reaction ATP + protein L-histidine = ADP + protein N-phospho-L-histidine.. In terms of biological role, histidine kinase involved in a two-component signaling pathway that regulates cell wall mannan and glucan biosynthesis. Regulates quorum sensing as well as hyphal formation, biofilm formation, chlamidospore formation, and virulence. Plays a prominent role in phagocyte activation. Involved in the covering of the most potent pro-inflammatory cell wall molecules, the beta-glucans, underneath a dense mannan layer, so that the pathogen becomes partly invisible for immune cells such as phagocytes. The polypeptide is Histidine protein kinase 1 (CHK1) (Candida albicans (strain SC5314 / ATCC MYA-2876) (Yeast)).